Here is a 2542-residue protein sequence, read N- to C-terminus: Unconventional myosin-IXa (2542 aa).

The Ras-associating domain occupies Asn-14–Leu-112. In terms of domain architecture, Myosin motor spans Lys-146 to His-1017. The chain crosses the membrane as a helical span at residues Ile-175 to Tyr-195. An ATP-binding site is contributed by Gly-239 to Thr-246. Ser-755 is modified (phosphoserine). Residues Gln-908–Ser-919 are actin-binding. 5 IQ domains span residues Leu-1021–Leu-1041, Leu-1043–Ala-1072, Met-1075–Ile-1104, Arg-1116–Leu-1145, and Gln-1139–Arg-1168. A neck or regulatory domain region spans residues Arg-1022–Lys-1163. The tract at residues Glu-1164–Lys-2505 is tail. The span at Arg-1221–Arg-1240 shows a compositional bias: basic and acidic residues. The interval Arg-1221–Arg-1276 is disordered. Phosphoserine is present on Ser-1243. Thr-1245 is subject to Phosphothreonine. Ser-1259 is subject to Phosphoserine. Residues Gln-1265–Lys-1292 are a coiled coil. The span at Lys-1266–Arg-1276 shows a compositional bias: basic residues. Phosphoserine is present on residues Ser-1300 and Ser-1318. The interval Lys-1342–Lys-1401 is disordered. Residues Ser-1358 to Asn-1371 are compositionally biased toward polar residues. Low complexity predominate over residues Ala-1372–Ala-1384. The segment covering Asp-1391–Lys-1401 has biased composition (basic and acidic residues). Residues Thr-1492–Thr-1539 are a coiled coil. Disordered regions lie at residues Arg-1650–Ser-1675, Ser-1693–Glu-1727, Gly-1767–Asp-1793, and Gln-1806–Val-1841. Over residues His-1665–Ser-1675 the composition is skewed to basic and acidic residues. Polar residues predominate over residues Gln-1715 to Asp-1726. Residues Cys-1821–Pro-1833 show a composition bias toward basic and acidic residues. Ser-1950 is subject to Phosphoserine. 2 consecutive Phorbol-ester/DAG-type zinc fingers follow at residues Gly-2001 to Cys-2050 and Ser-2068 to Ala-2119. The region spanning Val-2065–Tyr-2253 is the Rho-GAP domain. Ser-2293 and Ser-2296 each carry phosphoserine. Residues Thr-2324–Glu-2360 adopt a coiled-coil conformation. The interval Pro-2361 to Lys-2443 is disordered. Polar residues predominate over residues Thr-2377–Met-2386. The span at Ser-2420–Ser-2438 shows a compositional bias: low complexity. Position 2458 is a phosphoserine (Ser-2458). The interval Thr-2465 to Gln-2530 is disordered.

It belongs to the TRAFAC class myosin-kinesin ATPase superfamily. Myosin family. Post-translationally, phosphorylated by ALPK1 following monosodium urate monohydrate (MSU)-induced inflammation. As to expression, expressed in the eye, lung, liver, brain, heart, kidney, skeletal muscle and spleen. No detection was found in liver. In the brain, expressed in the ependymal cells of the third ventricle and the aqueduct.

The protein resides in the membrane. It is found in the cytoplasm. The protein localises to the synapse. It localises to the cell projection. Its subcellular location is the growth cone. Functionally, myosins are actin-based motor molecules with ATPase activity. Unconventional myosins serve in intracellular movements. Regulates Rho by stimulating it's GTPase activity in neurons. Required for the regulation of neurite branching and motor neuron axon guidance. In Mus musculus (Mouse), this protein is Unconventional myosin-IXa (Myo9a).